The following is an 818-amino-acid chain: Lon protease (818 aa).

The Lon N-terminal domain occupies 14 to 216 (LPVLPLRDVV…KVFALIEREI (203 aa)). 370 to 377 (GPPGVGKT) contributes to the ATP binding site. Positions 605–786 (ESLVGIVTGL…DEVIKVALMH (182 aa)) constitute a Lon proteolytic domain. Active-site residues include Ser-692 and Lys-735.

This sequence belongs to the peptidase S16 family. In terms of assembly, homohexamer. Organized in a ring with a central cavity.

It is found in the cytoplasm. The enzyme catalyses Hydrolysis of proteins in presence of ATP.. Functionally, ATP-dependent serine protease that mediates the selective degradation of mutant and abnormal proteins as well as certain short-lived regulatory proteins. Required for cellular homeostasis and for survival from DNA damage and developmental changes induced by stress. Degrades polypeptides processively to yield small peptide fragments that are 5 to 10 amino acids long. Binds to DNA in a double-stranded, site-specific manner. The protein is Lon protease of Wolbachia pipientis subsp. Culex pipiens (strain wPip).